The following is a 282-amino-acid chain: ATP synthase gamma chain (282 aa).

The protein belongs to the ATPase gamma chain family. In terms of assembly, F-type ATPases have 2 components, CF(1) - the catalytic core - and CF(0) - the membrane proton channel. CF(1) has five subunits: alpha(3), beta(3), gamma(1), delta(1), epsilon(1). CF(0) has three main subunits: a, b and c.

The protein resides in the cell membrane. In terms of biological role, produces ATP from ADP in the presence of a proton gradient across the membrane. The gamma chain is believed to be important in regulating ATPase activity and the flow of protons through the CF(0) complex. This Clostridium botulinum (strain 657 / Type Ba4) protein is ATP synthase gamma chain.